A 1334-amino-acid polypeptide reads, in one-letter code: MFYNQTVDKGKLKKLIAWAYQNYGSARCSQMADELKNLGFRFATKAGVSISVDDLTVPPAKRQMIESAEQEIRQTEQRYVRGEITEVERFQKVIDTWNSTSESLKDEVIRNFQVTDPLNSVYMMAFSGARGNMSQVRQLVGMRGLMANPQGEIIDLPIKTNFREGLTVTEYVISSYGARKGLVDTALRTADSGYLTRRLVDVSQDVIVREADCGTNRYVELTAMTDGDRVLIPLSDRLLGRSLAEDVVVNGEVIATRNQIIDDETAEKLGRLVDKIKVRSPLTCEAARSVCQTCYGWSLAHGHPVDMGEAVGIIAAQSIGEPGTQLTMRTFHTGGVFTGEVARQVRSPFEGTVRFLPGLSIRNVRTRHGDERDQVEAPGEIKLTPKDKTKETVTYSLTPGSLLFVTDGETVSEEQLLAEITSDKVQKSTEKATKDVTSDLAGEVLFSQLVPEEKTDRQGNTTRIAQRGGLLWILSGEVYNLPPGAEPVVSNGDQVQVGDVLAETKLVSTNGGLVRLAPNSREIDIVTASVSLDQAEVKVESSAGREQFIIHTGDGQSFLLKTTPGTKVQNHAIVAELIDDRYQTHTGGMIKYVDIEVAKGSRKQGYEITKGGTILWIPEETHEVNKDISLLQVEDGQYVEAGEEVVKDIFCNSSGVVEVIQKNDILREIIVKPGLLFMDLEPESSGIAQEQLIYPGTQLTPEVTIEELRQAEWVETNEGLGLLLRPVQEFTVQDQSTSPTQGSANQEGGRHIELRSVQRIFFKDGERVKSVEGCQLISTQLVLEISSEEPESVSHLTADIELEPIEDRDCQRLQLVILESLVLRRDSDNDPLGGNIQTRVLVQDGDEIPPGAVVARTEIQCKEAGEIRGIRKGSEAVRRLLIVSDRDEFILPLAVAPTVKARDLVIAEAEIAAGVLAPNSGQVLAVDKTATGYEIRLRKARPYRVSAGAILHIDEGDLVQRGDNLVLLVFERSKTGDIIQGLPRIEELLEARKPKEACVLARKPGVCQVEYQDSEIVDIKVVEDDGTISEYPLLGSQNPLVSDNQRIDVGQALTDGQANPHEILEVFFNYYVDSLGSYEAALKALEKTQMFLVDQVQSVYQSQGIDIADKHIEVIVRQMTSKVRIDDGGDTSMLPGELLELRQVETVNEAMSITGGAAAKYTPVLLGITKASLNTDSFISAASFQETTRVLTEAAIEGKSDWLRGLKENVIIGRLIPAGTGFNSHENTAGISDYTPPEEEYNYNNRSYYAPPGGLGLPPRPGFGDSSEDSDMILDDQTARAYAEGDVVDLEDDEMAFLSSRGSSRFSRQPISDRWSEADEEGEEDDFEEDYEEE.

Cys-213, Cys-284, Cys-291, and Cys-294 together coordinate Zn(2+). The span at 1299–1308 shows a compositional bias: low complexity; that stretch reads SSRGSSRFSR. Residues 1299–1334 are disordered; that stretch reads SSRGSSRFSRQPISDRWSEADEEGEEDDFEEDYEEE. Over residues 1318 to 1334 the composition is skewed to acidic residues; the sequence is ADEEGEEDDFEEDYEEE.

Belongs to the RNA polymerase beta' chain family. RpoC2 subfamily. As to quaternary structure, in cyanobacteria the RNAP catalytic core is composed of 2 alpha, 1 beta, 1 beta', 1 gamma and 1 omega subunit. When a sigma factor is associated with the core the holoenzyme is formed, which can initiate transcription. The cofactor is Zn(2+).

The enzyme catalyses RNA(n) + a ribonucleoside 5'-triphosphate = RNA(n+1) + diphosphate. Functionally, DNA-dependent RNA polymerase catalyzes the transcription of DNA into RNA using the four ribonucleoside triphosphates as substrates. This is DNA-directed RNA polymerase subunit beta' from Microcystis aeruginosa (strain NIES-843 / IAM M-2473).